Here is a 120-residue protein sequence, read N- to C-terminus: Ribonuclease P protein component (120 aa).

This sequence belongs to the RnpA family. In terms of assembly, consists of a catalytic RNA component (M1 or rnpB) and a protein subunit.

It catalyses the reaction Endonucleolytic cleavage of RNA, removing 5'-extranucleotides from tRNA precursor.. RNaseP catalyzes the removal of the 5'-leader sequence from pre-tRNA to produce the mature 5'-terminus. It can also cleave other RNA substrates such as 4.5S RNA. The protein component plays an auxiliary but essential role in vivo by binding to the 5'-leader sequence and broadening the substrate specificity of the ribozyme. The polypeptide is Ribonuclease P protein component (Desulfotalea psychrophila (strain LSv54 / DSM 12343)).